The following is a 344-amino-acid chain: uncharacterized protein (344 aa).

The N-terminal stretch at 1 to 19 (MRIIFYLTLLLFIFNKVKS) is a signal peptide. The propeptide at 323–344 (SATRNQISIMVLILSVLLVLIL) is removed in mature form.

The protein resides in the cell membrane. This is an uncharacterized protein from Dictyostelium discoideum (Social amoeba).